Reading from the N-terminus, the 542-residue chain is Hydroxylamine reductase (542 aa).

Cys3, Cys6, Cys15, and Cys21 together coordinate [4Fe-4S] cluster. Residues His243, Glu267, Cys311, Cys398, Cys426, Cys451, Glu485, and Lys487 each coordinate hybrid [4Fe-2O-2S] cluster. Cysteine persulfide is present on Cys398.

This sequence belongs to the HCP family. [4Fe-4S] cluster serves as cofactor. Requires hybrid [4Fe-2O-2S] cluster as cofactor.

Its subcellular location is the cytoplasm. It catalyses the reaction A + NH4(+) + H2O = hydroxylamine + AH2 + H(+). Functionally, catalyzes the reduction of hydroxylamine to form NH(3) and H(2)O. The polypeptide is Hydroxylamine reductase (Syntrophobacter fumaroxidans (strain DSM 10017 / MPOB)).